The following is a 950-amino-acid chain: UvrABC system protein A (950 aa).

ATP is bound at residue 42–49 (GLSGSGKS). The segment at 262-289 (CPVCSYSLPELEPRLFSFNNPMGSCPTC) adopts a C4-type zinc-finger fold. ABC transporter domains are found at residues 319 to 596 (WDKR…EKSV) and 616 to 945 (VNPG…KYLK). 649 to 656 (GVSGSGKS) contributes to the ATP binding site. The C4-type zinc-finger motif lies at 748 to 774 (CEACQGDGVIKVEMHFLPDVYVPCEVC).

This sequence belongs to the ABC transporter superfamily. UvrA family. In terms of assembly, forms a heterotetramer with UvrB during the search for lesions.

The protein resides in the cytoplasm. The UvrABC repair system catalyzes the recognition and processing of DNA lesions. UvrA is an ATPase and a DNA-binding protein. A damage recognition complex composed of 2 UvrA and 2 UvrB subunits scans DNA for abnormalities. When the presence of a lesion has been verified by UvrB, the UvrA molecules dissociate. The polypeptide is UvrABC system protein A (Neisseria gonorrhoeae).